Reading from the N-terminus, the 1101-residue chain is Furin-like protease 1, isoform 1-CRR (1101 aa).

Positions 1 to 57 (MKNDVVRWSRQPTSNTTNSSSSSRSDSNSTHKHRSKSNKLNARQLGSNAARSCQQRS) are disordered. Residues 13 to 28 (TSNTTNSSSSSRSDSN) are compositionally biased toward low complexity. 3 N-linked (GlcNAc...) asparagine glycosylation sites follow: Asn15, Asn18, and Asn28. Over residues 38–57 (NKLNARQLGSNAARSCQQRS) the composition is skewed to polar residues. N-linked (GlcNAc...) asparagine glycosylation is present at Asn108. Residues 119–139 (VFLLALQFSAVVFLCNINVGF) traverse the membrane as a helical segment. Residues 150–163 (SAGGSSPAAPSSAP) are compositionally biased toward low complexity. The tract at residues 150–187 (SAGGSSPAAPSSAPSSPPTVAVPPPPPPSSALKVDPNG) is disordered. Pro residues predominate over residues 164 to 178 (SSPPTVAVPPPPPPS). An N-linked (GlcNAc...) asparagine glycan is attached at Asn333. The Peptidase S8 domain maps to 340–654 (MWYLNRGGGL…YGLMDAAEMV (315 aa)). Catalysis depends on charge relay system residues Asp372 and His413. N-linked (GlcNAc...) asparagine glycosylation is present at Asn426. Intrachain disulfides connect Cys430–Cys579 and Cys522–Cys552. Residue Ser587 is the Charge relay system of the active site. An N-linked (GlcNAc...) asparagine glycan is attached at Asn606. The P/Homo B domain occupies 662–791 (AVPEQQRCEI…DMIFYGTETP (130 aa)). Cys669 and Cys695 are joined by a disulfide. N-linked (GlcNAc...) asparagine glycans are attached at residues Asn727 and Asn859. The disordered stretch occupies residues 886 to 915 (EEDEQDDEVTRGPVNPYSSSPMDHSLLMSN). Positions 901 to 915 (PYSSSPMDHSLLMSN) are enriched in polar residues. N-linked (GlcNAc...) asparagine glycosylation is present at Asn978. Residues 1014-1034 (TVLLLVSVIFTLMGVAVAGGI) form a helical membrane-spanning segment.

This sequence belongs to the peptidase S8 family. Furin subfamily. Ca(2+) is required as a cofactor. As to expression, in adults, isoform 1-CRR is expressed in CNS, fat body, and female reproductive tissues, and in embryos, in anal pads, hindgut, developing antennomaxillary complex, oenocytes, clipeolabrum, pharynx, trachea, CNS and developing posterior spiracles.

It localises to the golgi apparatus membrane. The enzyme catalyses Release of mature proteins from their proproteins by cleavage of -Arg-Xaa-Yaa-Arg-|-Zaa- bonds, where Xaa can be any amino acid and Yaa is Arg or Lys. Releases albumin, complement component C3 and von Willebrand factor from their respective precursors.. In terms of biological role, furin is likely to represent the ubiquitous endoprotease activity within constitutive secretory pathways and capable of cleavage at the RX(K/R)R consensus motif. The chain is Furin-like protease 1, isoform 1-CRR (Fur1) from Drosophila melanogaster (Fruit fly).